We begin with the raw amino-acid sequence, 92 residues long: UPF0358 protein SH1840 (92 aa).

This sequence belongs to the UPF0358 family.

The chain is UPF0358 protein SH1840 from Staphylococcus haemolyticus (strain JCSC1435).